The chain runs to 327 residues: MKISILGAGSFGTAIAIALSAHGISVNLWGRDHRNTTHINTYRKNLKYLPTYHLPDNIYATSNIDEVLSDNNTCIILTIPTQQLRTICTQIQHKQHMCKNTPILICSKGIEITSLKFPSEIAEEILQYNPIFILSGPSFAKEIAEHLPCSIVLAGDNKELGESLIEKISNDVLKIIYHQDIIGVQIGAALKNIIAIACGIIAGKNLGNNAVATVITKGMNEIKTLYIAKNHSIDLHTLIGPSCLGDLILTCTTEHSRNMAFGLEIGKGRNINTLIDHNLKLVEGTSTVKPLISLAKKLNVELPICISIYNLLHENISLDKAISNILS.

Positions 10, 11, 31, and 108 each coordinate NADPH. 3 residues coordinate sn-glycerol 3-phosphate: Lys108, Gly136, and Ser138. Ala140 is a binding site for NADPH. Positions 191, 246, 256, 257, and 258 each coordinate sn-glycerol 3-phosphate. The Proton acceptor role is filled by Lys191. An NADPH-binding site is contributed by Arg257. Positions 281 and 283 each coordinate NADPH.

It belongs to the NAD-dependent glycerol-3-phosphate dehydrogenase family.

Its subcellular location is the cytoplasm. The catalysed reaction is sn-glycerol 3-phosphate + NAD(+) = dihydroxyacetone phosphate + NADH + H(+). It carries out the reaction sn-glycerol 3-phosphate + NADP(+) = dihydroxyacetone phosphate + NADPH + H(+). It functions in the pathway membrane lipid metabolism; glycerophospholipid metabolism. Functionally, catalyzes the reduction of the glycolytic intermediate dihydroxyacetone phosphate (DHAP) to sn-glycerol 3-phosphate (G3P), the key precursor for phospholipid synthesis. The chain is Glycerol-3-phosphate dehydrogenase [NAD(P)+] from Ehrlichia ruminantium (strain Welgevonden).